The sequence spans 111 residues: Flagellar hook-basal body complex protein FliE (111 aa).

The protein belongs to the FliE family.

The protein resides in the bacterial flagellum basal body. The sequence is that of Flagellar hook-basal body complex protein FliE from Clostridium acetobutylicum (strain ATCC 824 / DSM 792 / JCM 1419 / IAM 19013 / LMG 5710 / NBRC 13948 / NRRL B-527 / VKM B-1787 / 2291 / W).